Here is a 128-residue protein sequence, read N- to C-terminus: Ribonuclease P protein component 4 (128 aa).

Residues C67, C70, C96, and C99 each contribute to the Zn(2+) site.

Belongs to the eukaryotic/archaeal RNase P protein component 4 family. As to quaternary structure, consists of a catalytic RNA component and at least 4-5 protein subunits. The cofactor is Zn(2+).

It localises to the cytoplasm. The catalysed reaction is Endonucleolytic cleavage of RNA, removing 5'-extranucleotides from tRNA precursor.. Part of ribonuclease P, a protein complex that generates mature tRNA molecules by cleaving their 5'-ends. The protein is Ribonuclease P protein component 4 of Methanopyrus kandleri (strain AV19 / DSM 6324 / JCM 9639 / NBRC 100938).